The following is a 372-amino-acid chain: Alanine dehydrogenase 1 (372 aa).

Histidine 94 is an active-site residue. 170-200 (TYVIFGGGVAATNAANVALGLNAKVIIIELN) contacts NAD(+).

It belongs to the AlaDH/PNT family.

The enzyme catalyses L-alanine + NAD(+) + H2O = pyruvate + NH4(+) + NADH + H(+). It functions in the pathway amino-acid degradation; L-alanine degradation via dehydrogenase pathway; NH(3) and pyruvate from L-alanine: step 1/1. Its function is as follows. May play a role in cell wall synthesis as L-alanine is an important constituent of the peptidoglycan layer. The protein is Alanine dehydrogenase 1 (ald1) of Staphylococcus aureus (strain NCTC 8325 / PS 47).